A 672-amino-acid polypeptide reads, in one-letter code: PHD finger protein MALE STERILITY 1 (672 aa).

Residues 614-664 form a PHD-type zinc finger; it reads RIECECGATEEDGERMVCCDICEVWQHTRCVGVQHNEEVPRIFLCQSCDQH.

In closed flower buds, especially in anthers.

It localises to the nucleus. Transcriptional activator required for anther and post-meiotic pollen development and maturation. Seems to regulate inflorescence branching and floral development. May control tapetal development by directly regulating tapetal programmed cell death (PCD) and breakdown. Implicated in pollen cytosolic components and wall development (e.g. exine and intine formation). The sequence is that of PHD finger protein MALE STERILITY 1 (MS1) from Arabidopsis thaliana (Mouse-ear cress).